A 315-amino-acid polypeptide reads, in one-letter code: Glutamine synthetase nodule isozyme (315 aa).

Residues 19–99 (IIAEYIWVGG…VICDTYTPSG (81 aa)) form the GS beta-grasp domain. The GS catalytic domain occupies 106 to 315 (KRHAAAKIFS…WGVANRGASI (210 aa)).

The protein belongs to the glutamine synthetase family. In terms of assembly, homooctamer.

It localises to the cytoplasm. The enzyme catalyses L-glutamate + NH4(+) + ATP = L-glutamine + ADP + phosphate + H(+). The protein is Glutamine synthetase nodule isozyme of Lupinus angustifolius (Narrow-leaved blue lupine).